A 279-amino-acid polypeptide reads, in one-letter code: HTH-type transcriptional regulator BhcR (279 aa).

Basic residues predominate over residues Met-1 to Gly-13. The interval Met-1–Glu-21 is disordered. In terms of domain architecture, HTH iclR-type spans Ile-26–Pro-87. Positions Leu-47 to Val-66 form a DNA-binding region, H-T-H motif. Positions Leu-102–Pro-271 constitute an IclR-ED domain.

In terms of biological role, transcriptional regulator of the bhc gene cluster involved in glycolate and glyoxylate assimilation via the beta-hydroxyaspartate cycle (BHAC). Glyoxylate negatively affects the interaction of BhcR with the promoter region of the bhc gene cluster. This chain is HTH-type transcriptional regulator BhcR, found in Paracoccus denitrificans (strain Pd 1222).